The chain runs to 198 residues: Glycerol-3-phosphate acyltransferase 3 (198 aa).

4 consecutive transmembrane segments (helical) span residues 4–24, 71–91, 113–133, and 147–167; these read TYLL…LVVG, LPMV…AVLG, LLCY…TLLF, and VVAV…AMCL.

This sequence belongs to the PlsY family. Probably interacts with PlsX.

The protein localises to the cell membrane. The enzyme catalyses an acyl phosphate + sn-glycerol 3-phosphate = a 1-acyl-sn-glycero-3-phosphate + phosphate. The protein operates within lipid metabolism; phospholipid metabolism. Catalyzes the transfer of an acyl group from acyl-phosphate (acyl-PO(4)) to glycerol-3-phosphate (G3P) to form lysophosphatidic acid (LPA). This enzyme utilizes acyl-phosphate as fatty acyl donor, but not acyl-CoA or acyl-ACP. The sequence is that of Glycerol-3-phosphate acyltransferase 3 from Bacillus anthracis.